The chain runs to 88 residues: ATP synthase F(0) complex subunit f, mitochondrial (88 aa).

At alanine 2 the chain carries N-acetylalanine. Serine 3 bears the Phosphoserine mark. An N6-acetyllysine modification is found at lysine 16. The helical transmembrane segment at 62–79 threads the bilayer; sequence MVLAAYVVFSYCISYKEL.

It belongs to the ATPase F chain family. As to quaternary structure, component of the ATP synthase complex composed at least of ATP5F1A/subunit alpha, ATP5F1B/subunit beta, ATP5MC1/subunit c (homooctomer), MT-ATP6/subunit a, MT-ATP8/subunit 8, ATP5ME/subunit e, ATP5MF/subunit f, ATP5MG/subunit g, ATP5MK/subunit k, ATP5MJ/subunit j, ATP5F1C/subunit gamma, ATP5F1D/subunit delta, ATP5F1E/subunit epsilon, ATP5PF/subunit F6, ATP5PB/subunit b, ATP5PD/subunit d, ATP5PO/subunit OSCP. ATP synthase complex consists of a soluble F(1) head domain (subunits alpha(3) and beta(3)) - the catalytic core - and a membrane F(0) domain - the membrane proton channel (subunits c, a, 8, e, f, g, k and j). These two domains are linked by a central stalk (subunits gamma, delta, and epsilon) rotating inside the F1 region and a stationary peripheral stalk (subunits F6, b, d, and OSCP).

It localises to the mitochondrion. Its subcellular location is the mitochondrion inner membrane. Its function is as follows. Subunit f, of the mitochondrial membrane ATP synthase complex (F(1)F(0) ATP synthase or Complex V) that produces ATP from ADP in the presence of a proton gradient across the membrane which is generated by electron transport complexes of the respiratory chain. ATP synthase complex consist of a soluble F(1) head domain - the catalytic core - and a membrane F(1) domain - the membrane proton channel. These two domains are linked by a central stalk rotating inside the F(1) region and a stationary peripheral stalk. During catalysis, ATP synthesis in the catalytic domain of F(1) is coupled via a rotary mechanism of the central stalk subunits to proton translocation. In vivo, can only synthesize ATP although its ATP hydrolase activity can be activated artificially in vitro. Part of the complex F(0) domain. This chain is ATP synthase F(0) complex subunit f, mitochondrial, found in Mus musculus (Mouse).